The chain runs to 188 residues: A-type ATP synthase subunit E (188 aa).

This sequence belongs to the V-ATPase E subunit family. In terms of assembly, has multiple subunits with at least A(3), B(3), C, D, E, F, H, I and proteolipid K(x).

It is found in the cell membrane. Its function is as follows. Component of the A-type ATP synthase that produces ATP from ADP in the presence of a proton gradient across the membrane. The polypeptide is A-type ATP synthase subunit E (Archaeoglobus fulgidus (strain ATCC 49558 / DSM 4304 / JCM 9628 / NBRC 100126 / VC-16)).